The sequence spans 780 residues: ATPase family gene 2 protein (780 aa).

Positions 1–23 (MAPKSSSSGSKKKSSASSNSADA) are enriched in low complexity. Residues 1 to 26 (MAPKSSSSGSKKKSSASSNSADAKAS) form a disordered region. Residues 286-293 (GPPGTGKT) and 557-564 (GPPGCSKT) each bind ATP.

Belongs to the AAA ATPase family. AFG2 subfamily. As to quaternary structure, homohexamer; ATP binding induces oligomerization. Forms a ring-shaped particle of about 12 nm diameter, that displays 6-fold radial symmetry. Associates with cytoplasmic pre-60S ribosomal particles containing ARX1, ALB1, RLP24 and NOG1. Binds to pre-60S ribosomal particles soon after their export from the nucleus and is released before REI1 and LSG1 are incorporated into the particles. Hexameric form interacts with RLP24 (via C-terminal); the interaction recruits AFG2 to pre-60S ribosomal particles and promotes AFG2 ATPase activity and RLP24 release from pre-60S ribosomal particles. Interacts (via N-terminus) with nucleoporin NUP116 (via N-terminus); the interaction is required for RLP24 release from pre-60S ribosomal particles.

The protein resides in the cytoplasm. It catalyses the reaction ATP + H2O = ADP + phosphate + H(+). The hexamer is activated by RLP24 during pre-60S ribosomal particle maturation; RLP24 activates ATPase activity of both ATP-binding regions and increases cooperativity between AFG2 subunits. The second ATP-binding region is inhibited by diazaborine; the inhibition requires prior ATP binding specifically to the second ATP-binding region. In terms of biological role, ATP-dependent chaperone which uses the energy provided by ATP hydrolysis to generate mechanical force to disassemble protein complexes. Plays an essential role in the cytoplasmic maturation steps of pre-60S ribosomal particles by promoting the release of shuttling protein RLP24 from the pre-ribosomal particles. This step facilitates the subsequent release of other shuttling proteins such as NOG1 and allows the transition of the pre-ribosomal particles to later maturation forms that bind REI1. Essential for viability. In Saccharomyces cerevisiae (strain ATCC 204508 / S288c) (Baker's yeast), this protein is ATPase family gene 2 protein.